A 226-amino-acid chain; its full sequence is MYTLIIPAAGQGKRMGAGKNKLFLLIDEVPIIVHTLRAFEKDKACKSIIMAINEEERPYFEELMQKYQIEKHVQFIQGGAERQDSVYNALQYASGVEYVLVHDGARPFVTNKVIRDVLTAAEKYGASICAVPVKDTVKKVEQGVVVETVERSQLNAVQTPQGFSVSLLLEAHRSAKQSCFLGTDDASLVERVGKQVGVVEGSYYNIKVTTPEDLLIAESFLRVQKK.

It belongs to the IspD/TarI cytidylyltransferase family. IspD subfamily.

The catalysed reaction is 2-C-methyl-D-erythritol 4-phosphate + CTP + H(+) = 4-CDP-2-C-methyl-D-erythritol + diphosphate. It participates in isoprenoid biosynthesis; isopentenyl diphosphate biosynthesis via DXP pathway; isopentenyl diphosphate from 1-deoxy-D-xylulose 5-phosphate: step 2/6. Catalyzes the formation of 4-diphosphocytidyl-2-C-methyl-D-erythritol from CTP and 2-C-methyl-D-erythritol 4-phosphate (MEP). The polypeptide is 2-C-methyl-D-erythritol 4-phosphate cytidylyltransferase (Bacillus cereus (strain ATCC 14579 / DSM 31 / CCUG 7414 / JCM 2152 / NBRC 15305 / NCIMB 9373 / NCTC 2599 / NRRL B-3711)).